Here is a 2531-residue protein sequence, read N- to C-terminus: Putative neurobeachin homolog (2531 aa).

Composition is skewed to acidic residues over residues methionine 1–aspartate 10, glutamate 26–asparagine 35, and glutamate 62–glutamate 74. 4 disordered regions span residues methionine 1 to proline 101, asparagine 1363 to glycine 1398, glutamate 1420 to glutamine 1440, and arginine 1642 to glutamate 1670. The segment covering asparagine 1363 to asparagine 1379 has biased composition (basic and acidic residues). A compositionally biased stretch (polar residues) spans glutamine 1427–glutamine 1440. Residues serine 1650–glutamate 1670 are compositionally biased toward basic and acidic residues. Residues proline 1714–proline 1822 form the BEACH-type PH domain. Positions methionine 1841–arginine 2130 constitute a BEACH domain. WD repeat units lie at residues glycine 2289–alanine 2332, glycine 2350–isoleucine 2389, leucine 2429–threonine 2468, and proline 2471–glutamate 2510.

This sequence belongs to the WD repeat neurobeachin family. As to quaternary structure, interacts with RII subunit of PKA.

It is found in the cytoplasm. The protein localises to the membrane. Its subcellular location is the nucleus. Its function is as follows. Binds to type II regulatory subunits of protein kinase A and anchors/targets them to the membrane. May anchor the kinase to cytoskeletal and/or organelle-associated proteins. Regulates endosomal traffic in polarized epithelial cells such as the vulval precursor cells and intestinal cells. Thought to act as a negative regulator of lin-12 activity in vulval precursor cells. May have a role in the internalization process from basolateral surface of polarized epithelial cells. The polypeptide is Putative neurobeachin homolog (Caenorhabditis briggsae).